A 185-amino-acid chain; its full sequence is Translation initiation factor IF-3 (185 aa).

This sequence belongs to the IF-3 family. Monomer.

It localises to the cytoplasm. Its function is as follows. IF-3 binds to the 30S ribosomal subunit and shifts the equilibrium between 70S ribosomes and their 50S and 30S subunits in favor of the free subunits, thus enhancing the availability of 30S subunits on which protein synthesis initiation begins. The sequence is that of Translation initiation factor IF-3 from Bacteroides thetaiotaomicron (strain ATCC 29148 / DSM 2079 / JCM 5827 / CCUG 10774 / NCTC 10582 / VPI-5482 / E50).